Consider the following 275-residue polypeptide: Small ribosomal subunit protein uS3 (275 aa).

The 69-residue stretch at 39–107 folds into the KH type-2 domain; that stretch reads VRIYLKKKLK…PVHVNIEEIR (69 aa). The disordered stretch occupies residues 216-275; that stretch reads AAATSAEPAAEEKKTRRAPSKTAARKPAAGTDKPLVAAKPAVKRVRKVETPAADTQKSGE.

The protein belongs to the universal ribosomal protein uS3 family. Part of the 30S ribosomal subunit. Forms a tight complex with proteins S10 and S14.

In terms of biological role, binds the lower part of the 30S subunit head. Binds mRNA in the 70S ribosome, positioning it for translation. The protein is Small ribosomal subunit protein uS3 of Polynucleobacter asymbioticus (strain DSM 18221 / CIP 109841 / QLW-P1DMWA-1) (Polynucleobacter necessarius subsp. asymbioticus).